The following is a 943-amino-acid chain: Isoleucine--tRNA ligase (943 aa).

Residues 59–69 (PYANGQIHLGH) carry the 'HIGH' region motif. Glutamate 577 is a binding site for L-isoleucyl-5'-AMP. A 'KMSKS' region motif is present at residues 618 to 622 (KMSKS). Position 621 (lysine 621) interacts with ATP. Residues cysteine 906, cysteine 909, cysteine 926, and cysteine 929 each coordinate Zn(2+).

Belongs to the class-I aminoacyl-tRNA synthetase family. IleS type 1 subfamily. Monomer. It depends on Zn(2+) as a cofactor.

The protein resides in the cytoplasm. It carries out the reaction tRNA(Ile) + L-isoleucine + ATP = L-isoleucyl-tRNA(Ile) + AMP + diphosphate. In terms of biological role, catalyzes the attachment of isoleucine to tRNA(Ile). As IleRS can inadvertently accommodate and process structurally similar amino acids such as valine, to avoid such errors it has two additional distinct tRNA(Ile)-dependent editing activities. One activity is designated as 'pretransfer' editing and involves the hydrolysis of activated Val-AMP. The other activity is designated 'posttransfer' editing and involves deacylation of mischarged Val-tRNA(Ile). The sequence is that of Isoleucine--tRNA ligase from Xylella fastidiosa (strain 9a5c).